The following is a 343-amino-acid chain: 3-isopropylmalate dehydrogenase (343 aa).

Substrate contacts are provided by Arg-94, Arg-104, Arg-128, and Asp-218. Residues Asp-218, Asp-242, and Asp-246 each contribute to the Mg(2+) site. Residue 278-290 coordinates NAD(+); sequence GSAPDIAGQNKAN.

The protein belongs to the isocitrate and isopropylmalate dehydrogenases family. LeuB type 2 subfamily. Homodimer. Mg(2+) serves as cofactor. Mn(2+) is required as a cofactor.

It is found in the cytoplasm. The catalysed reaction is (2R,3S)-3-isopropylmalate + NAD(+) = 4-methyl-2-oxopentanoate + CO2 + NADH. It functions in the pathway amino-acid biosynthesis; L-leucine biosynthesis; L-leucine from 3-methyl-2-oxobutanoate: step 3/4. Catalyzes the oxidation of 3-carboxy-2-hydroxy-4-methylpentanoate (3-isopropylmalate) to 3-carboxy-4-methyl-2-oxopentanoate. The product decarboxylates to 4-methyl-2 oxopentanoate. The protein is 3-isopropylmalate dehydrogenase of Bifidobacterium longum (strain DJO10A).